A 446-amino-acid polypeptide reads, in one-letter code: ATP synthase subunit b-delta (446 aa).

The segment at 1–168 is ATP synthase subunit b; the sequence is MSTFIGQLFG…PATADVDYPL (168 aa). A helical membrane pass occupies residues 4–24; sequence FIGQLFGFAVIVYLVWRFIVP. Positions 169–446 are ATP synthase subunit delta; that stretch reads LAKMRSASRR…LAAAEARLPD (278 aa).

This sequence in the N-terminal section; belongs to the ATPase B chain family. In the C-terminal section; belongs to the ATPase delta chain family. As to quaternary structure, F-type ATPases have 2 components, F(1) - the catalytic core - and F(0) - the membrane proton channel. F(1) has five subunits: alpha(3), beta(3), gamma(1), delta(1), epsilon(1). F(0) has three main subunits: a(1), b(2) and c(10-14). The alpha and beta chains form an alternating ring which encloses part of the gamma chain. F(1) is attached to F(0) by a central stalk formed by the gamma and epsilon chains, while a peripheral stalk is formed by the delta and b chains.

It is found in the cell membrane. In terms of biological role, f(1)F(0) ATP synthase produces ATP from ADP in the presence of a proton or sodium gradient. F-type ATPases consist of two structural domains, F(1) containing the extramembraneous catalytic core and F(0) containing the membrane proton channel, linked together by a central stalk and a peripheral stalk. During catalysis, ATP synthesis in the catalytic domain of F(1) is coupled via a rotary mechanism of the central stalk subunits to proton translocation. Its function is as follows. This fusion protein includes a component of the F(0) channel (subunit b) and of the F(1) subunit (subunit delta). Two copies of subunit b and one of delta together form the peripheral 'stator' stalk which links F(1) to F(0). The sequence is that of ATP synthase subunit b-delta (atpFH) from Mycobacterium tuberculosis (strain CDC 1551 / Oshkosh).